A 370-amino-acid polypeptide reads, in one-letter code: MKIEAISTTIVDVPTRRPLQMSFTTVHKQSYVIVQVKAGGLVGIGEGGSVGGPTWGSESAETIKVIIDNYLAPLLVGKDASNLSQARVLMDRAVTGNLSAKAAIDIALHDLKARALNLSIADLIGGTMRTSIPIAWTLASGDTARDIDSALEMIETRRHNRFKVKLGARTPAQDLEHIRSIVKAVGDRASVRVDVNQGWDEQTASIWIPRLEEAGVELVEQPVPRANFGALRRLTEQNGVAILADESLSSLSSAFELARDHAVDAFSLKLCNMGGIANTLKVAAVAEAAGISSYGGTMLDSTVGTAAALHVYATLPSLPYGCELIGPWVLGDRLTQQDLEIKDFEVHLPLGSGLGVDLDHDKVRHYTRAA.

The Proton acceptor role is filled by K165. Mn(2+) contacts are provided by D194, E220, and D245. The active-site Proton donor is the E323.

The protein belongs to the mandelate racemase/muconate lactonizing enzyme family. Mn(2+) serves as cofactor.

It carries out the reaction 2-[(2R)-2-chloro-2,5-dihydro-5-oxofuryl]acetate = 3-chloro-cis,cis-muconate + H(+). The protein operates within aromatic compound metabolism; 3-chlorocatechol degradation. The chain is Chloromuconate cycloisomerase (tcbD) from Pseudomonas sp. (strain P51).